The sequence spans 89 residues: Small ribosomal subunit protein uS15 (89 aa).

Belongs to the universal ribosomal protein uS15 family. As to quaternary structure, part of the 30S ribosomal subunit. Forms a bridge to the 50S subunit in the 70S ribosome, contacting the 23S rRNA.

Its function is as follows. One of the primary rRNA binding proteins, it binds directly to 16S rRNA where it helps nucleate assembly of the platform of the 30S subunit by binding and bridging several RNA helices of the 16S rRNA. Functionally, forms an intersubunit bridge (bridge B4) with the 23S rRNA of the 50S subunit in the ribosome. This chain is Small ribosomal subunit protein uS15, found in Klebsiella pneumoniae (strain 342).